The chain runs to 336 residues: Succinylglutamate desuccinylase (336 aa).

Zn(2+)-binding residues include histidine 59, glutamate 62, and histidine 151. Glutamate 215 is a catalytic residue.

Belongs to the AspA/AstE family. Succinylglutamate desuccinylase subfamily. Requires Zn(2+) as cofactor.

The enzyme catalyses N-succinyl-L-glutamate + H2O = L-glutamate + succinate. The protein operates within amino-acid degradation; L-arginine degradation via AST pathway; L-glutamate and succinate from L-arginine: step 5/5. Transforms N(2)-succinylglutamate into succinate and glutamate. The protein is Succinylglutamate desuccinylase of Pseudomonas fluorescens (strain ATCC BAA-477 / NRRL B-23932 / Pf-5).